The following is a 348-amino-acid chain: MDDFFMIWLLPLLIIVGKTLLLLVVLLVLVAYLLYADRKIWAAVQLRRGPNVVGPWGLLQSFADLIKFVVKEPIIPAGANKGVFLLAPFVSATLALSTWAVIPVNEGWEVAKINVGLLYILAISSLEVYGVIMGGWASNSKYPFLGALRSAAQMVSYEVSIGFVLVTVILVSGSLDLTTIVHKQSYGIGTTLGFPFNSFLDWNWLVLFPMFIIFFISALAETNRPPFDLVEAESELVAGHMVEYSSTPYMLFFLGEYVAIVLMCALTTILFLGGWLPPLDVWWLNWVPGIIWFVLKVCFVFFWFAMVKAFVPRYRYDQLMRLGWKVFLPFSLAMVVITATFLKYTGFA.

The next 8 membrane-spanning stretches (helical) occupy residues 7 to 27, 82 to 102, 115 to 135, 161 to 181, 199 to 219, 251 to 271, 287 to 307, and 322 to 342; these read IWLLPLLIIVGKTLLLLVVLL, GVFLLAPFVSATLALSTWAVI, VGLLYILAISSLEVYGVIMGG, IGFVLVTVILVSGSLDLTTIV, FLDWNWLVLFPMFIIFFISAL, LFFLGEYVAIVLMCALTTILF, VPGIIWFVLKVCFVFFWFAMV, and LGWKVFLPFSLAMVVITATFL.

It belongs to the complex I subunit 1 family. As to quaternary structure, NDH-1 is composed of 14 different subunits. Subunits NuoA, H, J, K, L, M, N constitute the membrane sector of the complex.

It is found in the cell inner membrane. The enzyme catalyses a quinone + NADH + 5 H(+)(in) = a quinol + NAD(+) + 4 H(+)(out). In terms of biological role, NDH-1 shuttles electrons from NADH, via FMN and iron-sulfur (Fe-S) centers, to quinones in the respiratory chain. The immediate electron acceptor for the enzyme in this species is believed to be ubiquinone. Couples the redox reaction to proton translocation (for every two electrons transferred, four hydrogen ions are translocated across the cytoplasmic membrane), and thus conserves the redox energy in a proton gradient. This subunit may bind ubiquinone. The protein is NADH-quinone oxidoreductase subunit H of Bartonella quintana (strain Toulouse) (Rochalimaea quintana).